Reading from the N-terminus, the 276-residue chain is ATP synthase subunit delta (276 aa).

The protein belongs to the ATPase delta chain family. In terms of assembly, F-type ATPases have 2 components, F(1) - the catalytic core - and F(0) - the membrane proton channel. F(1) has five subunits: alpha(3), beta(3), gamma(1), delta(1), epsilon(1). F(0) has three main subunits: a(1), b(2) and c(10-14). The alpha and beta chains form an alternating ring which encloses part of the gamma chain. F(1) is attached to F(0) by a central stalk formed by the gamma and epsilon chains, while a peripheral stalk is formed by the delta and b chains.

It localises to the cell membrane. In terms of biological role, f(1)F(0) ATP synthase produces ATP from ADP in the presence of a proton or sodium gradient. F-type ATPases consist of two structural domains, F(1) containing the extramembraneous catalytic core and F(0) containing the membrane proton channel, linked together by a central stalk and a peripheral stalk. During catalysis, ATP synthesis in the catalytic domain of F(1) is coupled via a rotary mechanism of the central stalk subunits to proton translocation. Its function is as follows. This protein is part of the stalk that links CF(0) to CF(1). It either transmits conformational changes from CF(0) to CF(1) or is implicated in proton conduction. This Kineococcus radiotolerans (strain ATCC BAA-149 / DSM 14245 / SRS30216) protein is ATP synthase subunit delta.